We begin with the raw amino-acid sequence, 537 residues long: Eukaryotic translation initiation factor 3 subunit L (537 aa).

The span at methionine 1 to arginine 19 shows a compositional bias: basic and acidic residues. The segment at methionine 1–aspartate 28 is disordered. Residues glutamate 297–proline 485 enclose the PCI domain.

The protein belongs to the eIF-3 subunit L family. As to quaternary structure, component of the eukaryotic translation initiation factor 3 (eIF-3) complex.

It is found in the cytoplasm. Functionally, component of the eukaryotic translation initiation factor 3 (eIF-3) complex, which is involved in protein synthesis of a specialized repertoire of mRNAs and, together with other initiation factors, stimulates binding of mRNA and methionyl-tRNAi to the 40S ribosome. The eIF-3 complex specifically targets and initiates translation of a subset of mRNAs involved in cell proliferation. This chain is Eukaryotic translation initiation factor 3 subunit L, found in Caenorhabditis briggsae.